The following is an 80-amino-acid chain: Large ribosomal subunit protein bL31B (80 aa).

It belongs to the bacterial ribosomal protein bL31 family. Type B subfamily. Part of the 50S ribosomal subunit.

This Streptococcus sanguinis (strain SK36) protein is Large ribosomal subunit protein bL31B.